Consider the following 566-residue polypeptide: Putative UDP-glucuronate:xylan alpha-glucuronosyltransferase 5 (566 aa).

Residues 17-37 (LILISLSFLGLLLNFKPLFLL) traverse the membrane as a helical; Signal-anchor for type II membrane protein segment. Residues Asp-372 and Asp-374 each coordinate Mn(2+). Substrate contacts are provided by residues 372 to 374 (DAD), 401 to 403 (NSG), 428 to 432 (NGGDQ), and 475 to 480 (HYLGLK). His-475 contacts Mn(2+).

The protein belongs to the glycosyltransferase 8 family. Glycogenin subfamily. Mn(2+) serves as cofactor.

The protein resides in the golgi apparatus membrane. Functionally, may be involved in the substitutions of the xylan backbone in stem glucuronoxylan. The protein is Putative UDP-glucuronate:xylan alpha-glucuronosyltransferase 5 (GUX5) of Arabidopsis thaliana (Mouse-ear cress).